We begin with the raw amino-acid sequence, 366 residues long: Galactoside alpha-(1,2)-fucosyltransferase 1 (366 aa).

Residues 1-8 (MWPLSHRH) lie on the Cytoplasmic side of the membrane. A helical; Signal-anchor for type II membrane protein transmembrane segment spans residues 9 to 25 (LCLAFLLVCVLSAISFF). Over 26–366 (LHVHQDSFRH…LSPLWTLAEP (341 aa)) the chain is Lumenal. N-linked (GlcNAc...) asparagine glycans are attached at residues Asn-66, Asn-302, and Asn-328.

The protein belongs to the glycosyltransferase 11 family.

It localises to the golgi apparatus. It is found in the golgi stack membrane. It carries out the reaction a beta-D-galactosyl-(1-&gt;4)-N-acetyl-beta-D-glucosaminyl derivative + GDP-beta-L-fucose = an alpha-L-Fuc-(1-&gt;2)-beta-D-Gal-(1-&gt;4)-beta-D-GlcNAc derivative + GDP + H(+). The catalysed reaction is a ganglioside GA1 + GDP-beta-L-fucose = a ganglioside Fuc-GA1 + GDP + H(+). It catalyses the reaction a beta-D-Gal-(1-&gt;3)-beta-D-GlcNAc-(1-&gt;3)-beta-D-Gal-(1-&gt;4)-beta-D-Glc-(1&lt;-&gt;1')-Cer(d18:1(4E)) + GDP-beta-L-fucose = alpha-L-fucosyl-(1-&gt;2)- beta-D-galactosyl-(1-&gt;3)-N-acetyl-beta-D-glucosaminyl-(1-&gt;3)-beta-D-galactosyl-(1-&gt;4)-beta-D-glucosyl-(1&lt;-&gt;1')-N-acylsphing-4-enine + GDP + H(+). The enzyme catalyses a neolactoside nLc4Cer(d18:1(4E)) + GDP-beta-L-fucose = a neolactoside IV(2)-alpha-Fuc-nLc4Cer(d18:1(4E)) + GDP + H(+). It carries out the reaction a ganglioside GM1 + GDP-beta-L-fucose = a ganglioside Fuc-GM1 + GDP + H(+). The catalysed reaction is beta-D-galactosyl-(1-&gt;3)-N-acetyl-D-galactosamine + GDP-beta-L-fucose = alpha-L-fucosyl-(1-&gt;2)-beta-D-galactosyl-(1-&gt;3)-N-acetyl-D-galactosamine + GDP + H(+). The protein operates within protein modification; protein glycosylation. Catalyzes the transfer of L-fucose, from a guanosine diphosphate-beta-L-fucose, to the terminal galactose residue of glycoconjugates through an alpha(1,2) linkage leading to H antigen synthesis that is an intermediate substrate in the synthesis of ABO blood group antigens. H antigen is essential for maturation of the glomerular layer of the main olfactory bulb, in cell migration and early cell-cell contacts during tumor associated angiogenesis. Preferentially fucosylates soluble lactose and to a lesser extent fucosylates glycolipids gangliosides GA1 and GM1a. This is Galactoside alpha-(1,2)-fucosyltransferase 1 from Alouatta caraya (Black howler monkey).